Reading from the N-terminus, the 396-residue chain is NADH-quinone oxidoreductase subunit D 1 (396 aa).

This sequence belongs to the complex I 49 kDa subunit family. NDH-1 is composed of 14 different subunits. Subunits NuoB, C, D, E, F, and G constitute the peripheral sector of the complex.

The protein resides in the cell inner membrane. The enzyme catalyses a quinone + NADH + 5 H(+)(in) = a quinol + NAD(+) + 4 H(+)(out). In terms of biological role, NDH-1 shuttles electrons from NADH, via FMN and iron-sulfur (Fe-S) centers, to quinones in the respiratory chain. The immediate electron acceptor for the enzyme in this species is believed to be ubiquinone. Couples the redox reaction to proton translocation (for every two electrons transferred, four hydrogen ions are translocated across the cytoplasmic membrane), and thus conserves the redox energy in a proton gradient. This chain is NADH-quinone oxidoreductase subunit D 1, found in Nitrobacter hamburgensis (strain DSM 10229 / NCIMB 13809 / X14).